Reading from the N-terminus, the 338-residue chain is MTTPVASMAVIGAGSYGTALAITLARNGHPVVLWGHDPAHIAALEAARCNQAFLPDVRFPDTLSLESDLSRTLSASRDVLVVVPSHVFGDVLRQLRPHLRPDARLVWATKGLEAETGRLLQDVACEALGPDIPLAVISGPTFAKELAAGLPTAIAVASQDAAFAEVLQQLLHCGKSFRVYRNPDFIGVQLGGAVKNVIAIGAGMSDGIGFGANARTALITRGLAEMSRLGVALGADPATFMGMAGLGDLVLTCTDNQSRNRRFGIMLGQGMGVDEAQVQIGQVVEGYRNTKEVMSLAQRYGVEMPITEQIYQVLYCHKDVREAALSLLGRASRDENAR.

Ser-15, Tyr-16, His-36, and Lys-110 together coordinate NADPH. Lys-110, Gly-139, and Thr-141 together coordinate sn-glycerol 3-phosphate. Ala-143 contacts NADPH. Residues Lys-195, Asp-248, Ser-258, Arg-259, and Asn-260 each coordinate sn-glycerol 3-phosphate. The active-site Proton acceptor is the Lys-195. Arg-259 provides a ligand contact to NADPH. Residues Val-283 and Glu-285 each coordinate NADPH.

Belongs to the NAD-dependent glycerol-3-phosphate dehydrogenase family.

The protein localises to the cytoplasm. The enzyme catalyses sn-glycerol 3-phosphate + NAD(+) = dihydroxyacetone phosphate + NADH + H(+). It carries out the reaction sn-glycerol 3-phosphate + NADP(+) = dihydroxyacetone phosphate + NADPH + H(+). The protein operates within membrane lipid metabolism; glycerophospholipid metabolism. In terms of biological role, catalyzes the reduction of the glycolytic intermediate dihydroxyacetone phosphate (DHAP) to sn-glycerol 3-phosphate (G3P), the key precursor for phospholipid synthesis. The sequence is that of Glycerol-3-phosphate dehydrogenase [NAD(P)+] from Edwardsiella ictaluri (strain 93-146).